A 458-amino-acid polypeptide reads, in one-letter code: SH2 domain-containing protein 7 (458 aa).

The SH2 domain maps to 51–142; it reads WFHGFITRKQ…PFGETLAAAC (92 aa). Disordered stretches follow at residues 204–235 and 267–326; these read RSVSDEVSAEVPTRVPPIPRRSPSLLDESPAG and AGSL…TLGS. Over residues 278-288 the composition is skewed to basic and acidic residues; the sequence is PSGKLSDEDQN. The span at 304-326 shows a compositional bias: polar residues; that stretch reads QGSTMPYTSLGFSLPPSSETLGS.

This is SH2 domain-containing protein 7 (Sh2d7) from Mus musculus (Mouse).